The following is a 258-amino-acid chain: Flagellar L-ring protein (258 aa).

The N-terminal stretch at 1–15 (MKRIVCLALFLSMTG) is a signal peptide. Cys-16 is lipidated: N-palmitoyl cysteine. Cys-16 is lipidated: S-diacylglycerol cysteine.

Belongs to the FlgH family. As to quaternary structure, the basal body constitutes a major portion of the flagellar organelle and consists of four rings (L,P,S, and M) mounted on a central rod.

The protein resides in the cell outer membrane. Its subcellular location is the bacterial flagellum basal body. In terms of biological role, assembles around the rod to form the L-ring and probably protects the motor/basal body from shearing forces during rotation. The chain is Flagellar L-ring protein from Vibrio atlanticus (strain LGP32) (Vibrio splendidus (strain Mel32)).